A 93-amino-acid polypeptide reads, in one-letter code: MTKSELILRLAERNPHLYQRDVEKIVTTIFDEITDALARGDRVELRGFGAFSVKKRDARLGRNPRTGETVDVNQKFIPFFKTGKQLRERLNTD.

This sequence belongs to the bacterial histone-like protein family. In terms of assembly, heterodimer of an alpha and a beta chain.

Functionally, this protein is one of the two subunits of integration host factor, a specific DNA-binding protein that functions in genetic recombination as well as in transcriptional and translational control. In Rhodospirillum centenum (strain ATCC 51521 / SW), this protein is Integration host factor subunit beta.